The primary structure comprises 618 residues: Protease 4 (618 aa).

The Cytoplasmic portion of the chain corresponds to 1–24; the sequence is MRTLWRFIAGFFKWTWRVLNFVRE. The helical transmembrane segment at 25–45 threads the bilayer; the sequence is MVLNLFFIFLVLVGVGIWMQI. At 46–618 the chain is on the periplasmic side; that stretch reads GNGSNSEQTA…AFCLTCANVR (573 aa). Lys-209 acts as the Proton donor/acceptor in catalysis. The active-site Nucleophile is Ser-409.

Belongs to the peptidase S49 family. As to quaternary structure, homotetramer.

The protein resides in the cell inner membrane. Its function is as follows. Digests cleaved signal peptides in vitro, its in vivo function is unknown. This activity is necessary to maintain proper secretion of mature proteins across the membrane. This chain is Protease 4 (sppA), found in Salmonella typhi.